The chain runs to 437 residues: Phosphoglucosamine mutase (437 aa).

The active-site Phosphoserine intermediate is the serine 93. Residues serine 93, aspartate 230, aspartate 232, and aspartate 234 each contribute to the Mg(2+) site. Phosphoserine is present on serine 93.

The protein belongs to the phosphohexose mutase family. Mg(2+) serves as cofactor. In terms of processing, activated by phosphorylation.

The catalysed reaction is alpha-D-glucosamine 1-phosphate = D-glucosamine 6-phosphate. Catalyzes the conversion of glucosamine-6-phosphate to glucosamine-1-phosphate. This is Phosphoglucosamine mutase from Clavibacter michiganensis subsp. michiganensis (strain NCPPB 382).